A 371-amino-acid chain; its full sequence is MSEQKRTPIFTEYASHGAKTIDFGGWDLPVQFSSIKHEHEVTRTKAGLFDVSHMGEISVKGPKSESFLQYVLTNDISKLEPGKAQYTIMCYEDGGTVDDLIVYKLDDEDYLLVVNAANTEKDANWIKQKNTYSNDEIVIEDVSNQYVQLAIQGPKAVEILQKCTDENVQEIKFFRFKNNVALKGIEAKALISRTGYTGEDGFEIYIDASSGVALWKLLLEKGEANGLEPIGLGARDTLRFEANLALYGQELSKDISPIEAGLGFAVKVNKGPDFIGKEVLKNQVENGTDRKLVGIEMIDKGIPRHEYEVLKDNKEIGFITSGTQSPTLNKNVGLALINISYTEIGTEVDVKVRKRILKAKIVPTPFYKRGR.

The protein belongs to the GcvT family. The glycine cleavage system is composed of four proteins: P, T, L and H.

The enzyme catalyses N(6)-[(R)-S(8)-aminomethyldihydrolipoyl]-L-lysyl-[protein] + (6S)-5,6,7,8-tetrahydrofolate = N(6)-[(R)-dihydrolipoyl]-L-lysyl-[protein] + (6R)-5,10-methylene-5,6,7,8-tetrahydrofolate + NH4(+). Its function is as follows. The glycine cleavage system catalyzes the degradation of glycine. This chain is Aminomethyltransferase, found in Oceanobacillus iheyensis (strain DSM 14371 / CIP 107618 / JCM 11309 / KCTC 3954 / HTE831).